The chain runs to 238 residues: Ribonuclease PH (238 aa).

Phosphate is bound by residues arginine 86 and 124–126 (GTR).

The protein belongs to the RNase PH family. In terms of assembly, homohexameric ring arranged as a trimer of dimers.

The enzyme catalyses tRNA(n+1) + phosphate = tRNA(n) + a ribonucleoside 5'-diphosphate. In terms of biological role, phosphorolytic 3'-5' exoribonuclease that plays an important role in tRNA 3'-end maturation. Removes nucleotide residues following the 3'-CCA terminus of tRNAs; can also add nucleotides to the ends of RNA molecules by using nucleoside diphosphates as substrates, but this may not be physiologically important. Probably plays a role in initiation of 16S rRNA degradation (leading to ribosome degradation) during starvation. The polypeptide is Ribonuclease PH (Klebsiella pneumoniae (strain 342)).